The primary structure comprises 498 residues: Tumor necrosis factor receptor superfamily member 8 (498 aa).

An N-terminal signal peptide occupies residues 1–18 (MSALLTAAGLLFLGMLQA). The Extracellular portion of the chain corresponds to 19 to 287 (FPTDRPLKTT…STGTPFLDPG (269 aa)). TNFR-Cys repeat units follow at residues 68–105 (QCAP…PRIC) and 106–146 (ECQP…DTIC). Disulfide bonds link C69–C81, C84–C97, C87–C105, C107–C121, and C128–C146. The disordered stretch occupies residues 142–168 (KDTICELPSSGSGPNCSNPGDRKTLTS). The segment covering 149-160 (PSSGSGPNCSNP) has biased composition (low complexity). N-linked (GlcNAc...) asparagine glycans are attached at residues N156, N183, and N229. Residues 204–256 (ELVKVPESSSSKAREPSPDPGNAEKNMTLELPSPGTLPDISTSENSKEPASTA) are disordered. The span at 242–256 (DISTSENSKEPASTA) shows a compositional bias: polar residues. Residues 288 to 308 (PVLFWVAMVVLLVGSGSFLLC) traverse the membrane as a helical segment. Over 309–498 (YWKACRRRFQ…DHGPTTVSEK (190 aa)) the chain is Cytoplasmic. Residues 338-358 (DSCPTEKLTQPQRSGSVTDPS) show a composition bias toward polar residues. Disordered stretches follow at residues 338–370 (DSCP…SPPP), 389–411 (LDDS…VSTE), and 436–498 (EVPE…VSEK). Residues S339 and S353 each carry the phosphoserine modification. Basic and acidic residues-rich tracts occupy residues 402–411 (EPPEPRVSTE), 456–465 (EVDHAPHYPE), and 484–498 (EGGK…VSEK).

The protein belongs to the TNFR8 family. As to quaternary structure, interacts with TRAF1, TRAF2, TRAF3 and TRAF5. Detected in thymus and in activated splenocytes.

It is found in the cell membrane. Its function is as follows. Receptor for TNFSF8/CD30L. May play a role in the regulation of cellular growth and transformation of activated lymphoblasts. Regulates gene expression through activation of NF-kappa-B. This is Tumor necrosis factor receptor superfamily member 8 from Mus musculus (Mouse).